A 316-amino-acid chain; its full sequence is MSIKEQSLMTPYLQFDRSQWAALRDSVPMTLTEDEIAQLKGINEDLSLEEVAEIYLPLSRLLNFYISSNLRRQAVLEQFLGTNGQRIPYIISIAGSVAVGKSTTARVLQALLSRWPEHRRVELITTDGFLHPNQVLKERGLMKKKGFPESYDMHRLVKFVSDLKSGVPNVTAPVYSHLIYDVIPEGDKTVAQPDILILEGLNVLQSGMDYPHDPHHVFVSDFVDFSIYVDAPEELLQTWYINRFLKFREGAFTDPDSYFHNYAKLSKEEAVNTATSLWKEINWLNLKQNILPTRERASLIMTKSANHAVEQVRLRK.

Residue 95-102 (GSVAVGKS) coordinates ATP.

The protein belongs to the prokaryotic pantothenate kinase family.

It is found in the cytoplasm. It carries out the reaction (R)-pantothenate + ATP = (R)-4'-phosphopantothenate + ADP + H(+). It functions in the pathway cofactor biosynthesis; coenzyme A biosynthesis; CoA from (R)-pantothenate: step 1/5. This is Pantothenate kinase from Salmonella choleraesuis (strain SC-B67).